Consider the following 303-residue polypeptide: Elongation factor Ts (303 aa).

Residues 79–82 (TDFT) form an involved in Mg(2+) ion dislocation from EF-Tu region.

This sequence belongs to the EF-Ts family.

Its subcellular location is the cytoplasm. Associates with the EF-Tu.GDP complex and induces the exchange of GDP to GTP. It remains bound to the aminoacyl-tRNA.EF-Tu.GTP complex up to the GTP hydrolysis stage on the ribosome. The sequence is that of Elongation factor Ts from Magnetococcus marinus (strain ATCC BAA-1437 / JCM 17883 / MC-1).